Consider the following 144-residue polypeptide: D-aminoacyl-tRNA deacylase (144 aa).

The short motif at 136 to 137 (GP) is the Gly-cisPro motif, important for rejection of L-amino acids element.

Belongs to the DTD family. Homodimer.

The protein resides in the cytoplasm. It catalyses the reaction glycyl-tRNA(Ala) + H2O = tRNA(Ala) + glycine + H(+). The catalysed reaction is a D-aminoacyl-tRNA + H2O = a tRNA + a D-alpha-amino acid + H(+). Functionally, an aminoacyl-tRNA editing enzyme that deacylates mischarged D-aminoacyl-tRNAs. Also deacylates mischarged glycyl-tRNA(Ala), protecting cells against glycine mischarging by AlaRS. Acts via tRNA-based rather than protein-based catalysis; rejects L-amino acids rather than detecting D-amino acids in the active site. By recycling D-aminoacyl-tRNA to D-amino acids and free tRNA molecules, this enzyme counteracts the toxicity associated with the formation of D-aminoacyl-tRNA entities in vivo and helps enforce protein L-homochirality. The polypeptide is D-aminoacyl-tRNA deacylase (Corynebacterium glutamicum (strain R)).